The following is a 1422-amino-acid chain: YEATS domain-containing protein 2 (1422 aa).

A Glycyl lysine isopeptide (Lys-Gly) (interchain with G-Cter in SUMO2) cross-link involves residue Lys-9. Residues 47 to 80 are a coiled coil; the sequence is KEQFALEMKNKEHEIEVIDQRLIEARRMMDKLRA. A Glycyl lysine isopeptide (Lys-Gly) (interchain with G-Cter in SUMO2) cross-link involves residue Lys-113. A disordered region spans residues 117–198; it reads ESPSRSSSPA…KTEQRNADLT (82 aa). 3 positions are modified to phosphoserine: Ser-118, Ser-120, and Ser-157. The segment covering 119–148 has biased composition (polar residues); that stretch reads PSRSSSPANQRAETPSANHSESDSLSQHND. Residues 149–165 are compositionally biased toward basic and acidic residues; it reads FLSDKDNNSNMDIEERL. Residues 166–176 are compositionally biased toward polar residues; the sequence is SNNMEQRPSRN. Residues 177-198 are compositionally biased toward basic and acidic residues; it reads TGRDTSRITGSHKTEQRNADLT. Residue Lys-189 forms a Glycyl lysine isopeptide (Lys-Gly) (interchain with G-Cter in SUMO2) linkage. In terms of domain architecture, YEATS spans 200–345; the sequence is ETSRLFVKKT…EDCIYPQSSE (146 aa). Histone H3K27cr binding regions lie at residues 259–261 and 282–284; these read HPS and WGE. Residue Lys-370 forms a Glycyl lysine isopeptide (Lys-Gly) (interchain with G-Cter in SUMO2) linkage. Phosphothreonine is present on Thr-407. 5 positions are modified to phosphoserine: Ser-447, Ser-463, Ser-465, Ser-471, and Ser-473. Residues 465 to 486 form a disordered region; that stretch reads SPISTPSPSPLPRTPTSTPVHV. A Phosphothreonine modification is found at Thr-478. Residue Lys-487 forms a Glycyl lysine isopeptide (Lys-Gly) (interchain with G-Cter in SUMO2) linkage. Residues 513 to 535 are compositionally biased toward polar residues; that stretch reads TTPSTGSPTNKISTASQVSQGTG. Residues 513-540 are disordered; sequence TTPSTGSPTNKISTASQVSQGTGSPVPK. Ser-536 is subject to Phosphoserine. Lys-552 participates in a covalent cross-link: Glycyl lysine isopeptide (Lys-Gly) (interchain with G-Cter in SUMO2). Phosphoserine is present on Ser-575. Residue Lys-592 forms a Glycyl lysine isopeptide (Lys-Gly) (interchain with G-Cter in SUMO2) linkage. Ser-627 carries the phosphoserine modification. Residues Lys-649 and Lys-773 each participate in a glycyl lysine isopeptide (Lys-Gly) (interchain with G-Cter in SUMO2) cross-link. The tract at residues 794 to 842 is disordered; the sequence is GSAASGGSGAGGGGGGGGGGGSGSGGGGSTGGGGGTAGGGTQSTAGPGG. Residues 797 to 842 are compositionally biased toward gly residues; it reads ASGGSGAGGGGGGGGGGGSGSGGGGSTGGGGGTAGGGTQSTAGPGG. A Glycyl lysine isopeptide (Lys-Gly) (interchain with G-Cter in SUMO2) cross-link involves residue Lys-923. Lys-1110 participates in a covalent cross-link: Glycyl lysine isopeptide (Lys-Gly) (interchain with G-Cter in SUMO1); alternate. Lys-1110 is covalently cross-linked (Glycyl lysine isopeptide (Lys-Gly) (interchain with G-Cter in SUMO2); alternate). Residue Lys-1130 forms a Glycyl lysine isopeptide (Lys-Gly) (interchain with G-Cter in SUMO2) linkage. A Phosphothreonine modification is found at Thr-1219. Glycyl lysine isopeptide (Lys-Gly) (interchain with G-Cter in SUMO2) cross-links involve residues Lys-1222 and Lys-1285.

As to quaternary structure, component of the ADA2A-containing complex (ATAC), composed of KAT14, KAT2A, TADA2L, TADA3L, ZZ3, MBIP, WDR5, YEATS2, SGF29 and DR1.

It is found in the nucleus. Functionally, chromatin reader component of the ATAC complex, a complex with histone acetyltransferase activity on histones H3 and H4. YEATS2 specifically recognizes and binds histone H3 crotonylated at 'Lys-27' (H3K27cr). Crotonylation marks active promoters and enhancers and confers resistance to transcriptional repressors. This Homo sapiens (Human) protein is YEATS domain-containing protein 2.